The primary structure comprises 176 residues: Trypsin inhibitor 1B (176 aa).

2 disulfide bridges follow: Cys-39-Cys-83 and Cys-132-Cys-143.

This sequence belongs to the protease inhibitor I3 (leguminous Kunitz-type inhibitor) family.

Inhibits trypsin stoichiometrically. In Erythrina variegata (Indian coral tree), this protein is Trypsin inhibitor 1B.